A 419-amino-acid chain; its full sequence is Effector protein BipC (419 aa).

Disordered regions lie at residues 62-91 and 338-402; these read VAGS…TVSG and LQSG…AKSQ. Basic and acidic residues-rich tracts occupy residues 71–91 and 380–392; these read ELAR…TVSG and TRDE…REAA.

The protein belongs to the SctB/SipC family.

It is found in the secreted. In Burkholderia pseudomallei (strain 1106a), this protein is Effector protein BipC (bipC).